A 441-amino-acid chain; its full sequence is Cytochrome c biogenesis protein Ccs1 (441 aa).

A run of 3 helical transmembrane segments spans residues Leu19 to Ile39, Thr78 to Ala98, and Ile164 to Asn184.

The protein belongs to the Ccs1/CcsB family. In terms of assembly, may interact with CcsA.

It is found in the plastid. The protein localises to the chloroplast thylakoid membrane. Its function is as follows. Required during biogenesis of c-type cytochromes (cytochrome c6 and cytochrome f) at the step of heme attachment. The chain is Cytochrome c biogenesis protein Ccs1 from Rhodomonas salina (Cryptomonas salina).